The sequence spans 201 residues: 3-isopropylmalate dehydratase small subunit (201 aa).

This sequence belongs to the LeuD family. LeuD type 1 subfamily. Heterodimer of LeuC and LeuD.

It carries out the reaction (2R,3S)-3-isopropylmalate = (2S)-2-isopropylmalate. It participates in amino-acid biosynthesis; L-leucine biosynthesis; L-leucine from 3-methyl-2-oxobutanoate: step 2/4. Functionally, catalyzes the isomerization between 2-isopropylmalate and 3-isopropylmalate, via the formation of 2-isopropylmaleate. This is 3-isopropylmalate dehydratase small subunit from Salmonella schwarzengrund (strain CVM19633).